The primary structure comprises 147 residues: uncharacterized protein (147 aa).

In terms of domain architecture, HTH marR-type spans 1-137; sequence MRDNTIGSLI…LYELMTKVHK (137 aa). Positions 53 to 76 form a DNA-binding region, H-T-H motif; it reads QMELAEKVTVTQGGISRMLTRLEK.

This is an uncharacterized protein from Bacillus cereus (strain ATCC 14579 / DSM 31 / CCUG 7414 / JCM 2152 / NBRC 15305 / NCIMB 9373 / NCTC 2599 / NRRL B-3711).